We begin with the raw amino-acid sequence, 294 residues long: MLVLHNSQKLQILYKSLEKSIPESIKVYGAIFNIKDKNPFNMEVLVDAWPDYQIVITRPQKQEMKDDQDHYTNTYHIFTKAPDKLEEVLSYSNVISWEQTLQIQGCQEGLDEAIRKVATSKSVQVDYMKTILFIPELPKKHKTSSNDKMELFEVDDDNKEGNFSNMFLDASHAGLVNEHWAFGKNERSLKYIERCLQDFLGFGVLGPEGQLVSWIVMEQSCELRMGYTVPKYRHQGNMLQIGYHLEKYLSQKEIPFYFHVADNNEKSLQALNNLGFKICPCGWHQWKCTPKKYC.

Lys-19 carries the N6-acetyllysine modification.

The protein belongs to the glycine N-acyltransferase family. Post-translationally, acetylation at Lys-19 drastically decreases the production of N-oleoyl and N-arachidonoyl glycines. As to expression, expressed at highest levels in salivary gland and trachea. Also detected in thyroid gland, spinal cord, prostate, lung and fetal brain.

The protein resides in the endoplasmic reticulum. The enzyme catalyses an acyl-CoA + glycine = an N-acylglycine + CoA + H(+). It carries out the reaction (9Z)-hexadecenoyl-CoA + glycine = N-(9Z-hexadecenoyl)-glycine + CoA + H(+). The catalysed reaction is octadecanoyl-CoA + glycine = N-octadecanoylglycine + CoA + H(+). It catalyses the reaction (5Z,8Z,11Z,14Z)-eicosatetraenoyl-CoA + glycine = N-(5Z,8Z,11Z,14Z)-eicosatetraenoyl-glycine + CoA + H(+). The enzyme catalyses (9Z)-octadecenoyl-CoA + glycine = N-(9Z-octadecenoyl)glycine + CoA + H(+). It carries out the reaction octanoyl-CoA + glycine = N-octanoylglycine + CoA + H(+). The catalysed reaction is decanoyl-CoA + glycine = N-decanoylglycine + CoA + H(+). It catalyses the reaction tetradecanoyl-CoA + glycine = N-tetradecanoylglycine + CoA + H(+). The enzyme catalyses dodecanoyl-CoA + glycine = N-dodecanoylglycine + CoA + H(+). It carries out the reaction (9Z,12Z)-octadecadienoyl-CoA + glycine = N-(9Z,12Z-octadecadienoyl)-glycine + CoA + H(+). The catalysed reaction is a fatty acyl-CoA + glycine = an N-(fatty acyl)-glycine + CoA + H(+). Functionally, mitochondrial acyltransferase which transfers the acyl group to the N-terminus of glycine. Conjugates numerous substrates, such as arachidonoyl-CoA and saturated medium and long-chain acyl-CoAs ranging from chain-length C8:0-CoA to C18:0-CoA, to form a variety of N-acylglycines. Shows a preference for monounsaturated fatty acid oleoyl-CoA (C18:1-CoA) as an acyl donor. Does not exhibit any activity toward C22:6-CoA and chenodeoxycholoyl-CoA, nor toward serine or alanine. This is Glycine N-acyltransferase-like protein 2 from Homo sapiens (Human).